The following is a 571-amino-acid chain: DExH-box ATP-dependent RNA helicase DExH16, mitochondrial (571 aa).

A mitochondrion-targeting transit peptide spans 1–56; that stretch reads MAYSVVRLRKVSALGISRVLQADKGSLWRFHFEPEFGDLLRLGVLTRNYRKNSGSP. Residues 83–212 enclose the Helicase ATP-binding domain; the sequence is IARKKKRKVI…HLCGDPAVVP (130 aa). ATP is bound at residue 96–103; sequence GPTNSGKT. The short motif at 176-179 is the DEIH box; degenerate element; that stretch reads DEIQ. One can recognise a Helicase C-terminal domain in the interval 213–399; sequence LVEDILKVTG…GLFPTFDLLS (187 aa).

It belongs to the DExH box helicase family. In terms of assembly, homodimer; in free form. Component of the mitochondrial degradosome (mtEXO) complex which is a heteropentamer containing 2 copies of SUPV3L1 and 3 copies of PNPT1. Mg(2+) serves as cofactor. The cofactor is Mn(2+). As to expression, weakly expressed.

The protein resides in the nucleus. The protein localises to the mitochondrion matrix. It is found in the mitochondrion nucleoid. It carries out the reaction ATP + H2O = ADP + phosphate + H(+). Its activity is regulated as follows. Activated by the presence of mitochondrial RNA. In terms of biological role, major helicase player in mitochondrial RNA metabolism. Component of the mitochondrial degradosome (mtEXO) complex, that degrades 3' overhang double-stranded RNA with a 3'-to-5' directionality in an ATP-dependent manner. ATPase and ATP-dependent multisubstrate helicase, able to unwind double-stranded (ds) DNA and RNA, and RNA/DNA heteroduplexes in the 5'-to-3' direction. Plays a role in the RNA surveillance system in mitochondria; regulates the stability of mature mRNAs, the removal of aberrantly formed mRNAs and the rapid degradation of non coding processing intermediates. Required during pollen development. The sequence is that of DExH-box ATP-dependent RNA helicase DExH16, mitochondrial from Arabidopsis thaliana (Mouse-ear cress).